The primary structure comprises 546 residues: Glutathione reductase (546 aa).

The transit peptide at 2-46 directs the protein to the apicoplast; it reads YKHRYFHFFFFFFFFLVSTKIIRSFTFLNNNTNLSNPVYFKKKAN. FAD is bound by residues Ser-58 and Gly-59. Residue Ser-58 coordinates glutathione. Arg-65 contributes to the glutathione binding site. Residues Glu-78, Thr-85, Cys-86, and Lys-94 each coordinate FAD. An intrachain disulfide couples Cys-86 to Cys-91. Tyr-141 is a binding site for glutathione. Ala-157 contacts FAD. NADP(+) is bound by residues Ile-233, Glu-236, Arg-253, Arg-259, and Gly-318. Residues Asp-358 and Thr-400 each coordinate FAD. Arg-408 is a binding site for glutathione. Val-430 contacts NADP(+). His-531 contributes to the FAD binding site. The active-site Proton acceptor is the His-531.

It belongs to the class-I pyridine nucleotide-disulfide oxidoreductase family. As to quaternary structure, homodimer. Requires FAD as cofactor.

Its subcellular location is the cytoplasm. The protein resides in the plastid. The protein localises to the apicoplast. The enzyme catalyses 2 glutathione + NADP(+) = glutathione disulfide + NADPH + H(+). Catalyzes the reduction of glutathione disulfide (GSSG) to reduced glutathione (GSH). Constitutes the major mechanism to maintain a high GSH:GSSG ratio in the cytosol. The chain is Glutathione reductase from Plasmodium falciparum (isolate 3D7).